We begin with the raw amino-acid sequence, 368 residues long: Aspartate-semialdehyde dehydrogenase (368 aa).

Residues R10–V13, T37–S38, and Q74 each bind NADP(+). R103 serves as a coordination point for phosphate. C136 functions as the Acyl-thioester intermediate in the catalytic mechanism. C136 bears the S-cysteinyl cysteine; in inhibited form mark. Residue Q163 participates in substrate binding. NADP(+)-binding positions include S166 to G167 and P194. Residue E242 participates in substrate binding. K245 is a binding site for phosphate. R268 lines the substrate pocket. Residue H275 is the Proton acceptor of the active site. Q351 is a binding site for NADP(+).

It belongs to the aspartate-semialdehyde dehydrogenase family. In terms of assembly, homodimer.

It carries out the reaction L-aspartate 4-semialdehyde + phosphate + NADP(+) = 4-phospho-L-aspartate + NADPH + H(+). It functions in the pathway amino-acid biosynthesis; L-lysine biosynthesis via DAP pathway; (S)-tetrahydrodipicolinate from L-aspartate: step 2/4. The protein operates within amino-acid biosynthesis; L-methionine biosynthesis via de novo pathway; L-homoserine from L-aspartate: step 2/3. Its pathway is amino-acid biosynthesis; L-threonine biosynthesis; L-threonine from L-aspartate: step 2/5. In terms of biological role, catalyzes the NADPH-dependent formation of L-aspartate-semialdehyde (L-ASA) by the reductive dephosphorylation of L-aspartyl-4-phosphate. This is Aspartate-semialdehyde dehydrogenase from Salmonella typhi.